The following is a 449-amino-acid chain: Pentalenene oxygenase (449 aa).

The chain crosses the membrane as a helical span at residues 251-273 (VITVMAAGTETVAGTLTWIFHLL). Cys393 is a binding site for heme.

It belongs to the cytochrome P450 family.

The protein resides in the membrane. The catalysed reaction is pentalenene + 4 reduced [2Fe-2S]-[ferredoxin] + 2 O2 + 4 H(+) = pentalen-13-al + 4 oxidized [2Fe-2S]-[ferredoxin] + 3 H2O. The protein operates within antibiotic biosynthesis; neopentalenolactone biosynthesis. Functionally, catalyzes the conversion of pentalenene to pentalen-13-al by stepwise oxidation via pentalen-13-ol, a precursor of neopentalenolactone antibiotic. The chain is Pentalenene oxygenase (ptlI) from Streptomyces avermitilis (strain ATCC 31267 / DSM 46492 / JCM 5070 / NBRC 14893 / NCIMB 12804 / NRRL 8165 / MA-4680).